A 1798-amino-acid chain; its full sequence is Focadhesin (1798 aa).

At K816 the chain carries N6-acetyllysine.

In terms of assembly, interacts with VCL. As to expression, expressed by glial and neuronal cells in brain.

Its subcellular location is the cell junction. It is found in the focal adhesion. The protein localises to the cytoplasm. It localises to the cytosol. In terms of biological role, required for the maintenance of SKIC2 and SKIC3 proteostatic levels in the liver. May be involved in the regulation of RNA degradation by the exosome complex. Potential tumor suppressor in gliomas. The chain is Focadhesin (Focad) from Mus musculus (Mouse).